The chain runs to 154 residues: Leghemoglobin-1 (154 aa).

The 149-residue stretch at 3 to 151 folds into the Globin domain; that stretch reads VLTDVQVALV…LAIIIKKEMK (149 aa). S46 contacts heme b. Phosphoserine is present on S46. H64 serves as a coordination point for O2. Residues K67, H98, and K101 each coordinate heme b. Y139 carries the post-translational modification Nitrated tyrosine.

Belongs to the plant globin family. Monomer. In terms of processing, nitrated in effective nodules and particularly in hypoxic conditions; this mechanism may play a protective role in the symbiosis by buffering toxic peroxynitrite NO(2)(-). Nitration level decrease during nodule senescence. Post-translationally, phosphorylation at Ser-46 disrupts the molecular environment of its porphyrin ring oxygen binding pocket, thus leading to a reduced oxygen consumption and to the delivery of oxygen O(2) to symbiosomes. Accumulates in developing root nodules and present in roots, especially in the upper part. Detected in leaves at low levels.

Its subcellular location is the cytoplasm. The protein resides in the cytosol. It localises to the nucleus. In terms of biological role, leghemoglobin that reversibly binds oxygen O(2) through a pentacoordinated heme iron. In root nodules, facilitates the diffusion of oxygen to the bacteroids while preventing the bacterial nitrogenase from being inactivated by buffering dioxygen, nitric oxide and carbon monoxide, and promoting the formation of reactive oxygen species (ROS, e.g. H(2)O(2)). This role is essential for symbiotic nitrogen fixation (SNF). The polypeptide is Leghemoglobin-1 (Lupinus luteus (European yellow lupine)).